Consider the following 1238-residue polypeptide: Chitin synthase 4 (1238 aa).

Disordered regions lie at residues 1–93 (MAEP…PERN) and 132–190 (TVSS…RRQK). Over residues 14–34 (TRDKSHSPYRESPSRRLRDVE) the composition is skewed to basic and acidic residues. The N-linked (GlcNAc...) asparagine glycan is linked to Asn50. 2 stretches are compositionally biased toward polar residues: residues 71–80 (SNPNPMSQSD) and 133–142 (VSSGSTQQDT). Residues 175-190 (RKDTRNLTEEEKRRQK) are compositionally biased toward basic and acidic residues. A glycan (N-linked (GlcNAc...) asparagine) is linked at Asn180. Helical transmembrane passes span 200–220 (IWNI…LQCF) and 235–255 (VGLI…TFGF). N-linked (GlcNAc...) asparagine glycans are attached at residues Asn365, Asn404, and Asn426. A helical membrane pass occupies residues 487–507 (VVLYVSLVFILAIVAAKFFLA). 2 disordered regions span residues 548 to 570 (PKIT…RGSM) and 582 to 606 (YAVD…AKLL). A compositionally biased stretch (polar residues) spans 553-562 (PASTVTGSDG). Asn617, Asn903, and Asn1030 each carry an N-linked (GlcNAc...) asparagine glycan. Helical transmembrane passes span 1062-1082 (IGTL…ILSI), 1087-1107 (VPVI…ILIV), and 1115-1135 (YILW…VLPA).

It belongs to the chitin synthase family. Class IV subfamily. In terms of processing, maximal activity requires trypsin activation, suggesting a zymogenic nature.

It localises to the cell membrane. It catalyses the reaction [(1-&gt;4)-N-acetyl-beta-D-glucosaminyl](n) + UDP-N-acetyl-alpha-D-glucosamine = [(1-&gt;4)-N-acetyl-beta-D-glucosaminyl](n+1) + UDP + H(+). Activity is stimulated by Mg(2+), and is more inhibited by polyoxin D than by nikkomycin. Functionally, polymerizes chitin, a structural polymer of the cell wall and septum, by transferring the sugar moiety of UDP-GlcNAc to the non-reducing end of the growing chitin polymer. CHS4 synthesizes a large amount of chitin and appears to play a role in the process of cell separation. CHS4 is particularly well suited for functioning at the higher temperatures associated with its poorly characterized saprophic environment and with human infection. The sequence is that of Chitin synthase 4 from Exophiala dermatitidis (Black yeast-like fungus).